A 1132-amino-acid polypeptide reads, in one-letter code: Protein CROWDED NUCLEI 1 (1132 aa).

Residues 1-31 (MSTPLKVWQRWSTPTKATNPDSNGSSHGTGL) are disordered. A compositionally biased stretch (polar residues) spans 10 to 28 (RWSTPTKATNPDSNGSSHG). Residues 73-714 (LLIEKKEWSS…KKLKEQREQF (642 aa)) are a coiled coil. 2 short sequence motifs (nuclear localization signal) span residues 379–386 (EKREAEWK) and 693–700 (IRKDVDDL). Phosphoserine occurs at positions 774 and 803. Residues 849–859 (AESETGTKEVE) are compositionally biased toward basic and acidic residues. 4 disordered regions span residues 849–871 (AESE…DQSD), 883–909 (SLSN…TRSV), 924–1039 (INLY…VQQE), and 1061–1132 (GVST…FLTT). Positions 861–871 (TNVNSDGDQSD) are enriched in polar residues. Residues Ser865 and Ser883 each carry the phosphoserine modification. Basic residues predominate over residues 895–907 (MKGKGKARTRRTR). Position 908 is a phosphoserine (Ser908). Phosphoserine is present on residues Ser1093, Ser1105, and Ser1112. Basic and acidic residues predominate over residues 1095 to 1105 (DVNKTPLRADS).

It belongs to the CRWN family. As to quaternary structure, core component of the LINC complex which is composed of inner nuclear membrane SUN domain-containing proteins coupled to outer nuclear membrane WIP and WIT proteins. The LINC complex also involves nucleoskeletal proteins CRWN/LINC and possibly KAKU4 and the cytoskeletal myosin KAKU1. Interacts with SUN1 and SUN2. Binds to KAKU4. As to expression, expressed at low levels in roots, leaves, flowers and flower stalks.

It is found in the nucleus membrane. The protein localises to the nucleus. Its subcellular location is the nucleoplasm. The protein resides in the nucleus lamina. In terms of biological role, component of SUN-protein-containing multivariate complexes also called LINC complexes which link the nucleoskeleton and cytoskeleton by providing versatile outer nuclear membrane attachment sites for cytoskeletal filaments. Required for nucleus structure organization (e.g. size and shape). The chain is Protein CROWDED NUCLEI 1 from Arabidopsis thaliana (Mouse-ear cress).